Here is a 434-residue protein sequence, read N- to C-terminus: Maltotriose-binding protein (434 aa).

Positions 1 to 20 are cleaved as a signal peptide; that stretch reads MRRATYAFALLAILVLGVVA. Positions 28–52 are disordered; sequence TTTPTQTSPATQPTTTQTPTQTETQ. Residues 29-52 are compositionally biased toward low complexity; it reads TTPTQTSPATQPTTTQTPTQTETQ.

This sequence belongs to the bacterial solute-binding protein 1 family.

Involved in an abc transport system for maltotriose. Binds maltotriose much more tightly than maltose. In Pyrococcus furiosus (strain ATCC 43587 / DSM 3638 / JCM 8422 / Vc1), this protein is Maltotriose-binding protein (malE).